The chain runs to 86 residues: Anti-adapter protein IraP (86 aa).

Residues 1–36 adopt a coiled-coil conformation; it reads MKNLIAELLFKLAQKEEESKELCAQVEALEIIVTAM.

Belongs to the IraP family. Interacts with RssB.

The protein resides in the cytoplasm. In terms of biological role, inhibits RpoS proteolysis by regulating RssB activity, thereby increasing the stability of the sigma stress factor RpoS especially during phosphate starvation, but also in stationary phase and during nitrogen starvation. Its effect on RpoS stability is due to its interaction with RssB, which probably blocks the interaction of RssB with RpoS, and the consequent delivery of the RssB-RpoS complex to the ClpXP protein degradation pathway. This chain is Anti-adapter protein IraP, found in Escherichia coli (strain SE11).